The chain runs to 513 residues: Probable cytosol aminopeptidase (513 aa).

Mn(2+) is bound by residues lysine 275 and aspartate 280. Residue lysine 287 is part of the active site. Positions 298, 357, and 359 each coordinate Mn(2+). Residue arginine 361 is part of the active site.

This sequence belongs to the peptidase M17 family. Mn(2+) is required as a cofactor.

It is found in the cytoplasm. The enzyme catalyses Release of an N-terminal amino acid, Xaa-|-Yaa-, in which Xaa is preferably Leu, but may be other amino acids including Pro although not Arg or Lys, and Yaa may be Pro. Amino acid amides and methyl esters are also readily hydrolyzed, but rates on arylamides are exceedingly low.. It carries out the reaction Release of an N-terminal amino acid, preferentially leucine, but not glutamic or aspartic acids.. In terms of biological role, presumably involved in the processing and regular turnover of intracellular proteins. Catalyzes the removal of unsubstituted N-terminal amino acids from various peptides. This is Probable cytosol aminopeptidase from Streptomyces avermitilis (strain ATCC 31267 / DSM 46492 / JCM 5070 / NBRC 14893 / NCIMB 12804 / NRRL 8165 / MA-4680).